The primary structure comprises 268 residues: Exopolysaccharide production negative regulator (268 aa).

The N-terminal stretch at 1 to 22 (MRAGELKSLRVAVLGMSLAVGA) is a signal peptide.

Negatively modulates exopolysaccharide (EPS) biosynthesis. The protein is Exopolysaccharide production negative regulator (exoR) of Rhizobium meliloti (strain 1021) (Ensifer meliloti).